Consider the following 345-residue polypeptide: Galacturonate transporter (345 aa).

Positions 1–32 (MFKIKGLRWYMIGLVTIGTVLGYLTRNAIAAA) are cleaved as a signal peptide. 8 helical membrane-spanning segments follow: residues 49–69 (YIIA…GYVL), 76–96 (VGYA…ALAN), 100–120 (GLAV…PAGL), 139–159 (FNVG…WAIM), 165–185 (MAFL…LYFY), 237–257 (FLAE…MFKA), 265–285 (IAMF…LGGY), and 304–324 (LVVT…LFTS).

The protein belongs to the major facilitator superfamily. Phthalate permease family.

The protein resides in the cell inner membrane. It carries out the reaction aldehydo-D-galacturonate(out) + H(+)(out) = aldehydo-D-galacturonate(in) + H(+)(in). Inhibited by cyanide and 2,4-dinitrophenol, but not by arsenate. Its function is as follows. Transport of D-galacturonate. Cannot transport the dimer digalacturonic acid. Uptake is an active process. This Dickeya chrysanthemi (Pectobacterium chrysanthemi) protein is Galacturonate transporter.